The following is a 630-amino-acid chain: Amino acid transporter heavy chain SLC3A2 (630 aa).

Residue Met-1 is modified to N-acetylmethionine. Glu-2 is modified (N-acetylserine). Glu-2 bears the Phosphoserine mark. The segment at 15-39 (IPRQLPGSHSEAGVQGLSAGDDSEL) is disordered. The Cytoplasmic segment spans residues 102-184 (MSQDTEVDMK…SPGWVRTRWA (83 aa)). Ser-103 carries the phosphoserine modification. The residue at position 106 (Thr-106) is a Phosphothreonine. Ser-134 carries the phosphoserine modification. A Glycyl lysine isopeptide (Lys-Gly) (interchain with G-Cter in ubiquitin) cross-link involves residue Lys-147. Ser-165 is subject to Phosphoserine. Residue Lys-166 forms a Glycyl lysine isopeptide (Lys-Gly) (interchain with G-Cter in SUMO2) linkage. Residues 185–205 (LLLLFWLGWLGMLAGAVVIIV) form a helical; Signal-anchor for type II membrane protein membrane-spanning segment. Over 206–630 (RAPRCRELPA…GLLLRFPYAA (425 aa)) the chain is Extracellular. Asn-365 and Asn-381 each carry an N-linked (GlcNAc...) asparagine glycan. Phosphoserine is present on residues Ser-406, Ser-408, and Ser-410. Asn-424 carries an N-linked (GlcNAc...) (complex) asparagine glycan. Asn-506 is a glycosylation site (N-linked (GlcNAc...) asparagine). Phosphoserine occurs at positions 527 and 531.

In terms of assembly, disulfide-linked heterodimer with a non-glycosylated catalytic light subunit (SLC7A5, SLC7A6, SLC7A7, SLC7A8, SLC7A10 or SLC7A11). Interacts with TLCD3A/CT120. Interacts with ICAM1. Constitutively and specifically associates with beta-1 integrins (alpha-2/beta-1, alpha-3/beta-1, alpha-5/beta-1 and alpha-6/beta-1), but minimally with alpha-4/beta-1. Interacts with LAPTM4B; recruits SLC3A2 and SLC7A5/LAT1 to lysosomes to promote leucine uptake into these organelles and is required for mTORC1 activation. As to quaternary structure, (Microbial infection) Interacts with hepatitis C virus/HCV envelope glycoprotein E2; the interaction may facilitate viral entry into host cell. Post-translationally, N-glycosylated; N-glycosylation is crucial for trafficking and stability of SLC3A2 to the plasma membrane. In terms of processing, phosphorylation on Ser-406; Ser-408 or Ser-410 and on Ser-527 or Ser-531 by ecto-protein kinases favors heterotypic cell-cell interactions. Expressed ubiquitously in all tissues tested with highest levels detected in kidney, placenta and testis and weakest level in thymus. During gestation, expression in the placenta was significantly stronger at full-term than at the mid-trimester stage. Expressed in HUVECS and at low levels in resting peripheral blood T-lymphocytes and quiescent fibroblasts. Also expressed in fetal liver and in the astrocytic process of primary astrocytic gliomas. Expressed in retinal endothelial cells and in the intestinal epithelial cell line C2BBe1.

The protein resides in the apical cell membrane. It localises to the cell membrane. The protein localises to the cell junction. It is found in the lysosome membrane. Its subcellular location is the melanosome. The protein resides in the basolateral cell membrane. Acts as a chaperone that facilitates biogenesis and trafficking of functional transporters heterodimers to the plasma membrane. Forms heterodimer with SLC7 family transporters (SLC7A5, SLC7A6, SLC7A7, SLC7A8, SLC7A10 and SLC7A11), a group of amino-acid antiporters. Heterodimers function as amino acids exchangers, the specificity of the substrate depending on the SLC7A subunit. Heterodimers SLC3A2/SLC7A6 or SLC3A2/SLC7A7 mediate the uptake of dibasic amino acids. Heterodimer SLC3A2/SLC7A11 functions as an antiporter by mediating the exchange of extracellular anionic L-cystine and intracellular L-glutamate across the cellular plasma membrane. SLC3A2/SLC7A10 translocates small neutral L- and D-amino acids across the plasma membrane. SLC3A2/SLC75 or SLC3A2/SLC7A8 translocates neutral amino acids with broad specificity, thyroid hormones and L-DOPA. SLC3A2 is essential for plasma membrane localization, stability, and the transport activity of SLC7A5 and SLC7A8. When associated with LAPTM4B, the heterodimer SLC7A5 is recruited to lysosomes to promote leucine uptake into these organelles, and thereby mediates mTORC1 activation. Modulates integrin-related signaling and is essential for integrin-dependent cell spreading, migration and tumor progression. Functionally, (Microbial infection) In case of hepatitis C virus/HCV infection, the complex formed by SLC3A2 and SLC7A5/LAT1 plays a role in HCV propagation by facilitating viral entry into host cell and increasing L-leucine uptake-mediated mTORC1 signaling activation, thereby contributing to HCV-mediated pathogenesis. In terms of biological role, (Microbial infection) Acts as a receptor for malaria parasite Plasmodium vivax (Thai isolate) in immature red blood cells. The sequence is that of Amino acid transporter heavy chain SLC3A2 from Homo sapiens (Human).